Consider the following 198-residue polypeptide: Phage-like element PBSX protein XkdA (198 aa).

It to B.subtilis YqaB.

The chain is Phage-like element PBSX protein XkdA (xkdA) from Bacillus subtilis (strain 168).